The primary structure comprises 133 residues: Ribonuclease P protein component (133 aa).

Belongs to the RnpA family. Consists of a catalytic RNA component (M1 or rnpB) and a protein subunit.

It carries out the reaction Endonucleolytic cleavage of RNA, removing 5'-extranucleotides from tRNA precursor.. Its function is as follows. RNaseP catalyzes the removal of the 5'-leader sequence from pre-tRNA to produce the mature 5'-terminus. It can also cleave other RNA substrates such as 4.5S RNA. The protein component plays an auxiliary but essential role in vivo by binding to the 5'-leader sequence and broadening the substrate specificity of the ribozyme. This Synechococcus sp. (strain JA-2-3B'a(2-13)) (Cyanobacteria bacterium Yellowstone B-Prime) protein is Ribonuclease P protein component.